Reading from the N-terminus, the 273-residue chain is Undecaprenyl-diphosphatase (273 aa).

8 helical membrane passes run 4–24, 45–65, 84–104, 112–132, 149–169, 187–207, 219–239, and 251–271; these read IELL…WLPI, FMSM…VVLF, TFTL…MIPF, FFNP…FIII, ITYQ…IPGT, YVAA…ASLL, AEIV…IIVI, and FKVF…YFLL.

It belongs to the UppP family.

It is found in the cell membrane. It carries out the reaction di-trans,octa-cis-undecaprenyl diphosphate + H2O = di-trans,octa-cis-undecaprenyl phosphate + phosphate + H(+). Catalyzes the dephosphorylation of undecaprenyl diphosphate (UPP). Confers resistance to bacitracin. The protein is Undecaprenyl-diphosphatase of Lachnoclostridium phytofermentans (strain ATCC 700394 / DSM 18823 / ISDg) (Clostridium phytofermentans).